Reading from the N-terminus, the 151-residue chain is Protein ECM12 (151 aa).

Asparagine 2 carries an N-linked (GlcNAc...) asparagine glycan. 2 helical membrane passes run 17 to 37 (LLVF…IFFF) and 51 to 71 (AFLA…VGFF). Residues asparagine 132 and asparagine 137 are each glycosylated (N-linked (GlcNAc...) asparagine).

The protein resides in the membrane. Its function is as follows. May be involved in cell wall organization and biogenesis. The protein is Protein ECM12 (ECM12) of Saccharomyces cerevisiae (strain ATCC 204508 / S288c) (Baker's yeast).